The following is a 230-amino-acid chain: tRNA (cytidine-2'-O-)-methyltransferase TrmJ (230 aa).

S-adenosyl-L-methionine-binding positions include 79–81 (TSG), glycine 115, isoleucine 135, and 142–144 (PIM).

Belongs to the class IV-like SAM-binding methyltransferase superfamily. RNA methyltransferase TrmH family. Homodimer.

The protein resides in the cytoplasm. It catalyses the reaction cytidine(32) in tRNA + S-adenosyl-L-methionine = 2'-O-methylcytidine(32) in tRNA + S-adenosyl-L-homocysteine + H(+). Catalyzes the formation of 2'O-methylated cytidine (Cm32) at position 32 in tRNA. This Methanocaldococcus jannaschii (strain ATCC 43067 / DSM 2661 / JAL-1 / JCM 10045 / NBRC 100440) (Methanococcus jannaschii) protein is tRNA (cytidine-2'-O-)-methyltransferase TrmJ.